Here is a 369-residue protein sequence, read N- to C-terminus: uncharacterized protein (369 aa).

It to A.pernix APE1276 and APE1804.

This is an uncharacterized protein from Saccharolobus solfataricus (strain ATCC 35092 / DSM 1617 / JCM 11322 / P2) (Sulfolobus solfataricus).